The sequence spans 415 residues: Mechanosensing system component YbdG (415 aa).

Residues 1 to 24 (MQDLISQVEDLAGIEIDHTTSMVM) are Periplasmic-facing. The chain crosses the membrane as a helical span at residues 25-45 (IFGIIFLTAVVVHIILHWVVL). Residues 46–67 (RTFEKRAIASSRLWLQIITQNK) are Cytoplasmic-facing. Residues 68–88 (LFHRLAFTLQGIIVNIQAVFW) traverse the membrane as a helical segment. The Periplasmic segment spans residues 89 to 104 (LQKGTEAADILTTCAQ). A helical transmembrane segment spans residues 105–125 (LWIMMYALLSVFSLLDVILNL). Residues 126 to 148 (AQKFPAASQLPLKGIFQGIKLIG) are Cytoplasmic-facing. The helical transmembrane segment at 149–169 (AILVGILMISLLIGQSPAILI) threads the bilayer. The Periplasmic portion of the chain corresponds to 170–173 (SGLG). Residues 174–194 (AMAAVLMLVFKDPILGLVAGI) traverse the membrane as a helical segment. The Cytoplasmic portion of the chain corresponds to 195 to 415 (QLSANDMLKL…IRSLAGAFKQ (221 aa)).

It belongs to the MscS (TC 1.A.23) family. Homoheptamer.

It localises to the cell inner membrane. Its function is as follows. Functions as a component of a mechanosensing system that transmits signals triggered by external osmotic changes to intracellular factors. The protein is Mechanosensing system component YbdG (ybdG) of Shigella flexneri.